The sequence spans 497 residues: Glycerol kinase (497 aa).

Threonine 13 lines the ADP pocket. Residues threonine 13, threonine 14, and serine 15 each coordinate ATP. Threonine 13 is a sn-glycerol 3-phosphate binding site. Arginine 17 provides a ligand contact to ADP. Arginine 83, glutamate 84, and tyrosine 135 together coordinate sn-glycerol 3-phosphate. The glycerol site is built by arginine 83, glutamate 84, and tyrosine 135. Phosphohistidine; by HPr is present on histidine 231. Aspartate 245 is a binding site for sn-glycerol 3-phosphate. Glycerol contacts are provided by aspartate 245 and glutamine 246. ADP is bound by residues threonine 267 and glycine 310. Residues threonine 267, glycine 310, glutamine 314, and glycine 411 each contribute to the ATP site. The ADP site is built by glycine 411 and asparagine 415.

The protein belongs to the FGGY kinase family. As to quaternary structure, homotetramer and homodimer (in equilibrium). In terms of processing, the phosphoenolpyruvate-dependent sugar phosphotransferase system (PTS), including enzyme I, and histidine-containing protein (HPr) are required for the phosphorylation, which leads to the activation of the enzyme.

The catalysed reaction is glycerol + ATP = sn-glycerol 3-phosphate + ADP + H(+). It functions in the pathway polyol metabolism; glycerol degradation via glycerol kinase pathway; sn-glycerol 3-phosphate from glycerol: step 1/1. Its activity is regulated as follows. Activated by phosphorylation and inhibited by fructose 1,6-bisphosphate (FBP). In terms of biological role, key enzyme in the regulation of glycerol uptake and metabolism. Catalyzes the phosphorylation of glycerol to yield sn-glycerol 3-phosphate. This is Glycerol kinase from Listeria monocytogenes serotype 4b (strain F2365).